The following is a 208-amino-acid chain: Uracil phosphoribosyltransferase (208 aa).

5-phospho-alpha-D-ribose 1-diphosphate contacts are provided by residues R78, R103, and 130-138 (DPMLATANS). Uracil is bound by residues I193 and 198 to 200 (GDA). Position 199 (D199) interacts with 5-phospho-alpha-D-ribose 1-diphosphate.

This sequence belongs to the UPRTase family. Mg(2+) is required as a cofactor.

It catalyses the reaction UMP + diphosphate = 5-phospho-alpha-D-ribose 1-diphosphate + uracil. It participates in pyrimidine metabolism; UMP biosynthesis via salvage pathway; UMP from uracil: step 1/1. Its activity is regulated as follows. Allosterically activated by GTP. Its function is as follows. Catalyzes the conversion of uracil and 5-phospho-alpha-D-ribose 1-diphosphate (PRPP) to UMP and diphosphate. This Brucella canis (strain ATCC 23365 / NCTC 10854 / RM-666) protein is Uracil phosphoribosyltransferase.